The primary structure comprises 379 residues: Armadillo repeat-containing X-linked protein 3 (379 aa).

Residues 1–6 (MGYARK) are Mitochondrial intermembrane-facing. Mitochondrion outer membrane (MOM)-targeting sequence regions lie at residues 1–6 (MGYARK) and 26–37 (RLTRGRKQNKEK). The helical; Signal-anchor transmembrane segment at 7 to 29 (VGWVTAGLVIGAGACYCIYRLTR) threads the bilayer. Over 30-379 (GRKQNKEKMA…AEHMFPKSQE (350 aa)) the chain is Cytoplasmic. 3 positions are modified to phosphoserine: serine 61, serine 67, and serine 72. Positions 89 to 98 (RARARARARA) are nuclear localization signal. A compositionally biased stretch (basic residues) spans 95-106 (RARATRARRAVQ). The segment at 95–116 (RARATRARRAVQKRASPNSDDT) is disordered. Phosphoserine is present on serine 110. ARM repeat units follow at residues 111–151 (PNSD…NNAA), 153–192 (AFNR…NLSV), and 233–272 (VTNE…NLAE).

The protein belongs to the eutherian X-chromosome-specific Armcx family. In terms of assembly, interacts (via ARM domain) with MIRO1, MIRO2 and TRAK2. The interaction with Miro is calcium-dependent. Interacts with SOX10.

It localises to the mitochondrion outer membrane. It is found in the cytoplasm. The protein localises to the nucleus. Its function is as follows. Regulates mitochondrial aggregation and transport in axons in living neurons. May link mitochondria to the TRAK2-kinesin motor complex via its interaction with Miro and TRAK2. Mitochondrial distribution and dynamics is regulated through ARMCX3 protein degradation, which is promoted by PCK and negatively regulated by WNT1. Enhances the SOX10-mediated transactivation of the neuronal acetylcholine receptor subunit alpha-3 and beta-4 subunit gene promoters. This is Armadillo repeat-containing X-linked protein 3 (ARMCX3) from Homo sapiens (Human).